Reading from the N-terminus, the 193-residue chain is dCTP deaminase (193 aa).

Residues 110–115 (RSSLAR), Asp128, 136–138 (VLE), Tyr171, Lys178, and Gln182 each bind dCTP. The active-site Proton donor/acceptor is the Glu138.

This sequence belongs to the dCTP deaminase family. As to quaternary structure, homotrimer.

It carries out the reaction dCTP + H2O + H(+) = dUTP + NH4(+). It participates in pyrimidine metabolism; dUMP biosynthesis; dUMP from dCTP (dUTP route): step 1/2. Catalyzes the deamination of dCTP to dUTP. The chain is dCTP deaminase from Buchnera aphidicola subsp. Baizongia pistaciae (strain Bp).